We begin with the raw amino-acid sequence, 572 residues long: 2-succinyl-5-enolpyruvyl-6-hydroxy-3-cyclohexene-1-carboxylate synthase (572 aa).

Belongs to the TPP enzyme family. MenD subfamily. Homodimer. Mg(2+) serves as cofactor. Requires Mn(2+) as cofactor. Thiamine diphosphate is required as a cofactor.

The catalysed reaction is isochorismate + 2-oxoglutarate + H(+) = 5-enolpyruvoyl-6-hydroxy-2-succinyl-cyclohex-3-ene-1-carboxylate + CO2. It participates in quinol/quinone metabolism; 1,4-dihydroxy-2-naphthoate biosynthesis; 1,4-dihydroxy-2-naphthoate from chorismate: step 2/7. Its pathway is quinol/quinone metabolism; menaquinone biosynthesis. Catalyzes the thiamine diphosphate-dependent decarboxylation of 2-oxoglutarate and the subsequent addition of the resulting succinic semialdehyde-thiamine pyrophosphate anion to isochorismate to yield 2-succinyl-5-enolpyruvyl-6-hydroxy-3-cyclohexene-1-carboxylate (SEPHCHC). The protein is 2-succinyl-5-enolpyruvyl-6-hydroxy-3-cyclohexene-1-carboxylate synthase of Shewanella amazonensis (strain ATCC BAA-1098 / SB2B).